The primary structure comprises 357 residues: MFAKLENLERRFEDLEQQLASSEVFNDQDRYRKLTKAHADLKEVVDVFRRYKELRQNLADNKELLDDADPEIRSMAHEEAKSLESAIPEIEQELQLLLLPKDPLDEKNTIVEIRAGTGGEEAALFAADLFRMYSRYAEIRGWKVEILSANESDTGGYKEVIALIVGDKVYSRLKFESGTHRVQRVPATESQGRIHTSAATVAILPEAEEVDVEIRPDDIRIDVFRASGAGGQHVNKTESAVRITHMPSGIVVSCQDEKSQHKNKAKAMKVLASRLLQAEQDRQHNEMAADRRSQVGSGDRSERIRTYNFPQGRVTDHRINLTLYSLDRVMEGEAQALFDALSTHAQTEALKAQADVQ.

Q232 carries the post-translational modification N5-methylglutamine. The segment covering 281–305 has biased composition (basic and acidic residues); the sequence is DRQHNEMAADRRSQVGSGDRSERIR. The tract at residues 281–309 is disordered; sequence DRQHNEMAADRRSQVGSGDRSERIRTYNF.

Belongs to the prokaryotic/mitochondrial release factor family. In terms of processing, methylated by PrmC. Methylation increases the termination efficiency of RF1.

It localises to the cytoplasm. Peptide chain release factor 1 directs the termination of translation in response to the peptide chain termination codons UAG and UAA. In Nitratidesulfovibrio vulgaris (strain DSM 19637 / Miyazaki F) (Desulfovibrio vulgaris), this protein is Peptide chain release factor 1.